The following is a 276-amino-acid chain: Cytoplasmic envelopment protein 1 (276 aa).

It belongs to the herpesviridae cytoplasmic envelopment protein 1 family.

The protein resides in the virion. It is found in the virion tegument. The protein localises to the host cytoplasm. It localises to the host Golgi apparatus. Plays a critical role in cytoplasmic virus egress. Participates in the final step of tegumentation and envelope acquisition within the host cytoplasm. This is Cytoplasmic envelopment protein 1 (42) from Equus caballus (Horse).